The chain runs to 75 residues: MPQHSRYSDEHVEQLLSDLLNVLEKHKAPTDLSLMVLGNMVTNLINTSIAPAQRQAIANSFARALQSSINDDKAH.

This sequence belongs to the UPF0352 family.

The chain is UPF0352 protein CKO_00587 from Citrobacter koseri (strain ATCC BAA-895 / CDC 4225-83 / SGSC4696).